The following is a 126-amino-acid chain: Protein C10 (126 aa).

A2 bears the N-acetylalanine mark.

It belongs to the UPF0456 family. In terms of tissue distribution, ubiquitously expressed, with higher expression in lung.

The protein resides in the cytoplasm. Functionally, in brain, may be required for corpus callosum development. This is Protein C10 (Grcc10) from Mus musculus (Mouse).